A 197-amino-acid chain; its full sequence is Cytochrome c-L (197 aa).

The first 25 residues, 1 to 25, serve as a signal peptide directing secretion; sequence MMNRVKIGTALLGLTLAGIALPALA. Positions 90, 93, and 94 each coordinate heme c.

Post-translationally, binds 1 heme c group covalently per subunit.

Its subcellular location is the periplasm. Its function is as follows. Electron acceptor for MDH. Acts in methanol oxidation. The polypeptide is Cytochrome c-L (moxG) (Methylorubrum extorquens (strain ATCC 14718 / DSM 1338 / JCM 2805 / NCIMB 9133 / AM1) (Methylobacterium extorquens)).